We begin with the raw amino-acid sequence, 152 residues long: Methylglyoxal synthase (152 aa).

Residues 5-152 (TRTVQAQKHI…YQLYLQQRLK (148 aa)) enclose the MGS-like domain. Residues histidine 19, lysine 23, 45–48 (TGTT), and 65–66 (SG) contribute to the substrate site. Aspartate 71 (proton donor/acceptor) is an active-site residue. Residue histidine 98 participates in substrate binding.

This sequence belongs to the methylglyoxal synthase family.

The catalysed reaction is dihydroxyacetone phosphate = methylglyoxal + phosphate. Functionally, catalyzes the formation of methylglyoxal from dihydroxyacetone phosphate. In Erwinia tasmaniensis (strain DSM 17950 / CFBP 7177 / CIP 109463 / NCPPB 4357 / Et1/99), this protein is Methylglyoxal synthase.